Consider the following 424-residue polypeptide: Histidine--tRNA ligase (424 aa).

It belongs to the class-II aminoacyl-tRNA synthetase family. As to quaternary structure, homodimer.

The protein localises to the cytoplasm. The catalysed reaction is tRNA(His) + L-histidine + ATP = L-histidyl-tRNA(His) + AMP + diphosphate + H(+). The chain is Histidine--tRNA ligase from Salmonella heidelberg (strain SL476).